The sequence spans 264 residues: Short-chain dehydrogenase/reductase malC (264 aa).

Residues 13–35 (GKNVLIIGGTSGIGFAVAQLVIE) form a helical membrane-spanning segment. Residues threonine 22, serine 23, isoleucine 25, serine 45, asparagine 46, lysine 49, aspartate 75, asparagine 88, arginine 130, valine 202, and threonine 204 each contribute to the NADP(+) site. N-linked (GlcNAc...) asparagine glycosylation occurs at asparagine 249.

Belongs to the short-chain dehydrogenases/reductases (SDR) family.

The protein localises to the membrane. It catalyses the reaction 1-hydroxy-3-{[2-(1,1-dimethylallyl)-indol-3-yl]methyl}-6H,7H,8H-5lambda(5)-pyrrolo[1,2-a]pyrazine + NADPH + H(+) = 1-hydroxy-3-{[2-(1,1-dimethylallyl)-indol-3-yl]methyl}-4H,6H,7H,8H-pyrrolo[1,2-a]pyrazine + NADP(+). It carries out the reaction 1-hydroxy-3-{[2-(1,1-dimethylallyl)-indol-3-yl]methyl}-4H,6H,7H,8H-pyrrolo[1,2-a]pyrazine = (+)-premalbrancheamide. The protein operates within alkaloid biosynthesis. Functionally, short-chain dehydrogenase/reductase; part of the gene cluster that mediates the biosynthesis of malbrancheamide, a dichlorinated fungal indole alkaloid that belongs to a family of natural products containing a characteristic bicyclo[2.2.2]diazaoctane core. The first step of malbrancheamide biosynthesis involves coupling of L-proline and L-tryptophan by malG, a bimodular NRPS, to produce L-Pro-L-Trp aldehyde through reductive offloading. This compound undergoes spontaneous cyclization and dehydration to give a dienamine which is reverse prenylated at C-2 by malE. The other prenyltransferase present in the cluster, malB, displays modest activity, suggesting that may be a redundant gene in the pathway. Subsequently, a [4+2] Diels-Alder cyclo-addition catalyzed by the bifunctional enzyme malC forms the characteristic bicyclo[2.2.2]diazaoctane ring of premalbrancheamid. The first reaction catalyzed is a NADPH-dependent reduction reaction in which the nicotinamide cofactor is a stoichiometric reagent. Either NADH or NADPH is effective as a cofactor. NADP(+) is required for stereocontrolled formation of premalbrancheamide, however it does not appear to be required as a formal stoichiometric reagent because the second reaction performed by malC, the [4+2] cycloaddition, is a balanced chemical reaction without requirement for hydride transfer to balance the reaction. Finally, the flavin-dependent halogenase malA catalyzes the iterative dichlorination of the indole ring of premalbrancheamide to yield C-9 monochlorinated malbrancheamide B, C-8 monochlorinated isomalbrancheamide B, and dichlorinated malbrancheamide. MalA is also able to brominate premalbrancheamide at C-9 to yield malbrancheamide C, and, to a lesser extend, at C-8 to yield isomalbrancheamide C. Finally, malA can brominate C-9 monochlorinated malbrancheamide B at C-8 to yield malbrancheamide D, or C-8 monochlorinated isomalbrancheamide B at C-9 to produce isomalbrancheamide D. This chain is Short-chain dehydrogenase/reductase malC, found in Malbranchea aurantiaca.